The chain runs to 469 residues: Neuraminidase (469 aa).

The Intravirion portion of the chain corresponds to 1–12 (MNTNQRIITIGT). The tract at residues 11 to 33 (GTICLIVGIISLLLQIGNIILLW) is involved in apical transport and lipid raft association. A helical transmembrane segment spans residues 13 to 33 (ICLIVGIISLLLQIGNIILLW). The Virion surface portion of the chain corresponds to 34 to 469 (MSHSIQTGEK…GADLPFTIDK (436 aa)). The hypervariable stalk region stretch occupies residues 36 to 90 (HSIQTGEKSHPKVCNQSVITYENNTWVNQTYVNISNTNIAAGQGVTPIILAGNSS). Asparagine 50, asparagine 58, asparagine 63, asparagine 68, and asparagine 88 each carry an N-linked (GlcNAc...) asparagine; by host glycan. The tract at residues 91 to 469 (LCPISGWAIY…GADLPFTIDK (379 aa)) is head of neuraminidase. Intrachain disulfides connect cysteine 92–cysteine 417, cysteine 124–cysteine 129, cysteine 184–cysteine 231, cysteine 233–cysteine 238, cysteine 279–cysteine 292, cysteine 281–cysteine 290, cysteine 318–cysteine 335, and cysteine 421–cysteine 446. Substrate is bound at residue arginine 118. Asparagine 146 carries N-linked (GlcNAc...) asparagine; by host glycosylation. Aspartate 151 functions as the Proton donor/acceptor in the catalytic mechanism. Substrate is bound at residue arginine 152. An N-linked (GlcNAc...) asparagine; by host glycan is attached at asparagine 235. 277 to 278 (EE) contacts substrate. Arginine 293 is a substrate binding site. Ca(2+) contacts are provided by aspartate 294, aspartate 324, and asparagine 344. Arginine 368 contributes to the substrate binding site. Tyrosine 402 acts as the Nucleophile in catalysis.

This sequence belongs to the glycosyl hydrolase 34 family. Homotetramer. Ca(2+) serves as cofactor. Post-translationally, N-glycosylated.

The protein localises to the virion membrane. It is found in the host apical cell membrane. The enzyme catalyses Hydrolysis of alpha-(2-&gt;3)-, alpha-(2-&gt;6)-, alpha-(2-&gt;8)- glycosidic linkages of terminal sialic acid residues in oligosaccharides, glycoproteins, glycolipids, colominic acid and synthetic substrates.. Its activity is regulated as follows. Inhibited by the neuraminidase inhibitors zanamivir (Relenza) and oseltamivir (Tamiflu). These drugs interfere with the release of progeny virus from infected cells and are effective against all influenza strains. Resistance to neuraminidase inhibitors is quite rare. Its function is as follows. Catalyzes the removal of terminal sialic acid residues from viral and cellular glycoconjugates. Cleaves off the terminal sialic acids on the glycosylated HA during virus budding to facilitate virus release. Additionally helps virus spread through the circulation by further removing sialic acids from the cell surface. These cleavages prevent self-aggregation and ensure the efficient spread of the progeny virus from cell to cell. Otherwise, infection would be limited to one round of replication. Described as a receptor-destroying enzyme because it cleaves a terminal sialic acid from the cellular receptors. May facilitate viral invasion of the upper airways by cleaving the sialic acid moieties on the mucin of the airway epithelial cells. Likely to plays a role in the budding process through its association with lipid rafts during intracellular transport. May additionally display a raft-association independent effect on budding. Plays a role in the determination of host range restriction on replication and virulence. Sialidase activity in late endosome/lysosome traffic seems to enhance virus replication. This chain is Neuraminidase, found in Influenza A virus (strain A/New Jersey/8/1976 H1N1).